The sequence spans 102 residues: Putative defensin-like protein 152 (102 aa).

A signal peptide spans 1 to 29 (MKKASQLSTTILTIFIVLAIGMMVKGTVG). Cystine bridges form between Cys34–Cys93, Cys51–Cys71, Cys56–Cys87, and Cys60–Cys89.

Belongs to the DEFL family.

It localises to the secreted. The chain is Putative defensin-like protein 152 (LCR11) from Arabidopsis thaliana (Mouse-ear cress).